Here is a 342-residue protein sequence, read N- to C-terminus: L-lysine 2,3-aminomutase (342 aa).

One can recognise a Radical SAM core domain in the interval H106–E329. Positions 120, 124, and 127 each coordinate [4Fe-4S] cluster. Residue K332 is modified to N6-(pyridoxal phosphate)lysine.

The protein belongs to the radical SAM superfamily. KamA family. [4Fe-4S] cluster serves as cofactor. Pyridoxal 5'-phosphate is required as a cofactor.

It carries out the reaction L-lysine = D-beta-lysine. Its function is as follows. With EpmA is involved in the beta-lysylation step of the post-translational modification of translation elongation factor P (EF-P) on 'Lys-34'. EpmB appears to act before EpmA. Displays lysine 2,3-aminomutase activity, producing (R)-beta-lysine from (S)-alpha-lysine (L-lysine). Cannot use (S)-ornithine or (R)-alpha-lysine as a substrate. The chain is L-lysine 2,3-aminomutase (epmB) from Escherichia coli (strain K12).